The chain runs to 192 residues: Bifunctional protein PyrR (192 aa).

Residues 107–119 (VVLVDDVLFSGRT) carry the PRPP-binding motif.

The protein belongs to the purine/pyrimidine phosphoribosyltransferase family. PyrR subfamily.

It carries out the reaction UMP + diphosphate = 5-phospho-alpha-D-ribose 1-diphosphate + uracil. In terms of biological role, regulates the transcription of the pyrimidine nucleotide (pyr) operon in response to exogenous pyrimidines. Also displays a weak uracil phosphoribosyltransferase activity which is not physiologically significant. The polypeptide is Bifunctional protein PyrR (Corynebacterium efficiens (strain DSM 44549 / YS-314 / AJ 12310 / JCM 11189 / NBRC 100395)).